Reading from the N-terminus, the 833-residue chain is G-type lectin S-receptor-like serine/threonine-protein kinase RKS1 (833 aa).

Positions 1–18 (MKVVFVIFFFFLFQFCIS) are cleaved as a signal peptide. Residues 19 to 144 (VDTIMRRQSL…VTGRSFWESF (126 aa)) enclose the Bulb-type lectin domain. Topologically, residues 19 to 440 (VDTIMRRQSL…NGLSGKRRVL (422 aa)) are extracellular. Asn79, Asn92, Asn100, Asn109, Asn228, and Asn256 each carry an N-linked (GlcNAc...) asparagine glycan. Residues 280–330 (PKEQCDNYAHCGPNGYCDSPSSKTFECTCLPGFEPKFPRHWFLRDSSGGCT) enclose the EGF-like domain. 3 cysteine pairs are disulfide-bonded: Cys284–Cys296, Cys290–Cys306, and Cys308–Cys329. Residues 338–421 (CSEKDGFVKL…SGQDFYIRVD (84 aa)) form the PAN domain. N-linked (GlcNAc...) asparagine glycans are attached at residues Asn363 and Asn376. 2 disulfide bridges follow: Cys369-Cys396 and Cys373-Cys379. The helical transmembrane segment at 441–461 (LILISLIAAVMLLTVILFCVV) threads the bilayer. Residues 462-833 (RERRKSNRHR…DVTFSDIQGR (372 aa)) lie on the Cytoplasmic side of the membrane. The Protein kinase domain occupies 515–800 (FSSQNKLGAG…NLPNPKHPAF (286 aa)). ATP-binding positions include 521 to 529 (LGAGGFGPV) and Lys543. Phosphoserine is present on residues Ser549 and Ser564. A caM-binding region spans residues 604 to 621 (EQRAELDWPKRMEIVRGI). Residue Asp640 is the Proton acceptor of the active site. Residues Ser644 and Ser657 each carry the phosphoserine modification. A Phosphothreonine modification is found at Thr674. Phosphoserine occurs at positions 717 and 821.

Belongs to the protein kinase superfamily. Ser/Thr protein kinase family.

It is found in the cell membrane. The enzyme catalyses L-seryl-[protein] + ATP = O-phospho-L-seryl-[protein] + ADP + H(+). The catalysed reaction is L-threonyl-[protein] + ATP = O-phospho-L-threonyl-[protein] + ADP + H(+). The polypeptide is G-type lectin S-receptor-like serine/threonine-protein kinase RKS1 (RKS1) (Arabidopsis thaliana (Mouse-ear cress)).